Reading from the N-terminus, the 211-residue chain is Protein-methionine-sulfoxide reductase heme-binding subunit MsrQ (211 aa).

The next 5 membrane-spanning stretches (helical) occupy residues Trp-10–Ile-30, Leu-82–Val-102, Pro-116–Thr-136, Phe-153–Ser-173, and Ile-178–Phe-198.

Belongs to the MsrQ family. As to quaternary structure, heterodimer of a catalytic subunit (MsrP) and a heme-binding subunit (MsrQ). It depends on FMN as a cofactor. Requires heme b as cofactor.

The protein localises to the cell inner membrane. Functionally, part of the MsrPQ system that repairs oxidized periplasmic proteins containing methionine sulfoxide residues (Met-O), using respiratory chain electrons. Thus protects these proteins from oxidative-stress damage caused by reactive species of oxygen and chlorine generated by the host defense mechanisms. MsrPQ is essential for the maintenance of envelope integrity under bleach stress, rescuing a wide series of structurally unrelated periplasmic proteins from methionine oxidation, including the primary periplasmic chaperone SurA and the lipoprotein Pal. MsrQ provides electrons for reduction to the reductase catalytic subunit MsrP, using the quinone pool of the respiratory chain. In Escherichia coli (strain UTI89 / UPEC), this protein is Protein-methionine-sulfoxide reductase heme-binding subunit MsrQ.